Consider the following 326-residue polypeptide: MNTSHHHGLHHSFRNHSQGALPVGKPSHGDRGSASGCYEQLLISTEIFLTLGLVSLLENILVIAAIVKNKNLHSPMYFFICSLAVADLLVSVSNASETVVMALITGGNLTNRESIIKNMDNVFDSMICSSLLASIWSLLAIAVDRYITIFYALRYHNIMTQRRAGTIITCIWTFCTVSGVLFIVYSESTTVLICLISMFFTMLALMASLYVHMFLLARLHMKRIAALPGNGPIWQAANMKGAITITILLGVFVVCWAPFFLHLILMISCPRNPYCVCFMSHFNMYLILIMCNSVIDPLIYAFRSQEMRKTFKEICCCWYGLASLCV.

A compositionally biased stretch (basic residues) spans 1-14 (MNTSHHHGLHHSFR). The segment at 1–31 (MNTSHHHGLHHSFRNHSQGALPVGKPSHGDR) is disordered. Over 1 to 46 (MNTSHHHGLHHSFRNHSQGALPVGKPSHGDRGSASGCYEQLLISTE) the chain is Extracellular. N-linked (GlcNAc...) asparagine glycosylation is found at Asn2 and Asn15. The chain crosses the membrane as a helical span at residues 47 to 67 (IFLTLGLVSLLENILVIAAIV). At 68-71 (KNKN) the chain is on the cytoplasmic side. A helical membrane pass occupies residues 72 to 92 (LHSPMYFFICSLAVADLLVSV). The Extracellular segment spans residues 93–121 (SNASETVVMALITGGNLTNRESIIKNMDN). Asn94 and Asn108 each carry an N-linked (GlcNAc...) asparagine glycan. Residues 122–142 (VFDSMICSSLLASIWSLLAIA) traverse the membrane as a helical segment. Residues 143–163 (VDRYITIFYALRYHNIMTQRR) lie on the Cytoplasmic side of the membrane. The helical transmembrane segment at 164 to 184 (AGTIITCIWTFCTVSGVLFIV) threads the bilayer. Topologically, residues 185–190 (YSESTT) are extracellular. Residues 191–211 (VLICLISMFFTMLALMASLYV) form a helical membrane-spanning segment. Topologically, residues 212–246 (HMFLLARLHMKRIAALPGNGPIWQAANMKGAITIT) are cytoplasmic. A helical transmembrane segment spans residues 247 to 267 (ILLGVFVVCWAPFFLHLILMI). At 268–281 (SCPRNPYCVCFMSH) the chain is on the extracellular side. Residues 282 to 302 (FNMYLILIMCNSVIDPLIYAF) form a helical membrane-spanning segment. The Cytoplasmic portion of the chain corresponds to 303 to 326 (RSQEMRKTFKEICCCWYGLASLCV). Cys316 carries the S-palmitoyl cysteine lipid modification.

Belongs to the G-protein coupled receptor 1 family. In terms of assembly, homodimer; disulfide-linked, also forms higher order oligomers. Interacts with mrap2a; decreasing ligand-sensitivity. Interacts with mrap2b; increasing ligand-sensitivity and generation of cAMP.

It is found in the cell membrane. Functionally, receptor specific to the heptapeptide core common to adrenocorticotropic hormone and alpha-, beta-, and gamma-MSH. Plays a central role in energy homeostasis and somatic growth. This receptor is mediated by G proteins that stimulate adenylate cyclase (cAMP). This is Melanocortin receptor 4 (mc4r) from Danio rerio (Zebrafish).